Reading from the N-terminus, the 172-residue chain is Light-harvesting complex-like protein OHP2, chloroplastic (172 aa).

Residues 1-43 (MSVASPIQCIRILNPSSSSSSSTASSSFRFSTTTKPCVFIIRC) constitute a chloroplast transit peptide. Residues 44 to 135 (SQTEGPLRRP…QPKNEISNGR (92 aa)) lie on the Stromal side of the membrane. The segment at 45-90 (QTEGPLRRPSAPPTLREPQKPVPPSQPSSSPPPSPPPQKAVAVDGK) is disordered. Pro residues predominate over residues 64-82 (KPVPPSQPSSSPPPSPPPQ). Residues 136 to 156 (WAMFGFAVGMLTEYATGSDLV) form a helical membrane-spanning segment. Over 157-172 (DQVKILLSNFGILDLE) the chain is Lumenal.

This sequence belongs to the ELIP/psbS family. In terms of assembly, component of a high molecular weight complex containing OHP1, OHP2 and HCF244, and PSII core proteins D1/D2, HCF136 and HCF173. Forms a trimeric complex with OHP1 and HCF244 that mutually stabilizes each subunit.

Its subcellular location is the plastid. It localises to the chloroplast thylakoid membrane. Its function is as follows. May play a photoprotective role within PSI in response to light stress. Forms a trimeric complex with OHP1 and HCF244 that is required to promote PSII core subunit assembly. The trimeric complex forms a transient PSII reaction center-like complex with PsbA, PsbD, PsbE, PsbF and PsbI subunits in thylakoids for early assembly of PSII as well as PSII repair. The trimeric complex is required for the recruitment of ribosomes to the psbA mRNA during PSII biogenesis and repair. Forms a heterodimer with OHP1 that binds chlorophylls and carotenoids, and that may function in the delivery of pigments to the PsbA subunit of PSII. This is Light-harvesting complex-like protein OHP2, chloroplastic from Arabidopsis thaliana (Mouse-ear cress).